Reading from the N-terminus, the 178-residue chain is MPNPVLLYCLVLLAGMGTSQGENTQSEETCTHFPGGLPHMLRELRAAFGRVKIFFQTKDQLDDMLLSESLLEDFKGYLGCQALSEMIQFYLVEVMPQAENHSPDVKEHVNSLGEKLKTLRLRLRRCHRFLPCENKSKAVQQVKDAFSKLQEKGIYKAMSEFDIFINYIEAYMTAKINS.

An N-terminal signal peptide occupies residues 1-18; the sequence is MPNPVLLYCLVLLAGMGT. Disulfide bonds link C30–C126 and C80–C132. An N-linked (GlcNAc...) asparagine glycan is attached at N134.

The protein belongs to the IL-10 family. As to quaternary structure, homodimer. Interacts with IL10RA and IL10RB.

Its subcellular location is the secreted. Major immune regulatory cytokine that acts on many cells of the immune system where it has profound anti-inflammatory functions, limiting excessive tissue disruption caused by inflammation. Mechanistically, IL10 binds to its heterotetrameric receptor comprising IL10RA and IL10RB leading to JAK1 and STAT2-mediated phosphorylation of STAT3. In turn, STAT3 translocates to the nucleus where it drives expression of anti-inflammatory mediators. Targets antigen-presenting cells (APCs) such as macrophages and monocytes and inhibits their release of pro-inflammatory cytokines including granulocyte-macrophage colony-stimulating factor /GM-CSF, granulocyte colony-stimulating factor/G-CSF, IL-1 alpha, IL-1 beta, IL-6, IL-8 and TNF-alpha. Also interferes with antigen presentation by reducing the expression of MHC-class II and co-stimulatory molecules, thereby inhibiting their ability to induce T cell activation. In addition, controls the inflammatory response of macrophages by reprogramming essential metabolic pathways including mTOR signaling. This Marmota monax (Woodchuck) protein is Interleukin-10 (IL10).